Consider the following 267-residue polypeptide: Tryptophan synthase alpha chain (267 aa).

Residues E49 and D60 each act as proton acceptor in the active site.

Belongs to the TrpA family. As to quaternary structure, tetramer of two alpha and two beta chains.

It carries out the reaction (1S,2R)-1-C-(indol-3-yl)glycerol 3-phosphate + L-serine = D-glyceraldehyde 3-phosphate + L-tryptophan + H2O. The protein operates within amino-acid biosynthesis; L-tryptophan biosynthesis; L-tryptophan from chorismate: step 5/5. Functionally, the alpha subunit is responsible for the aldol cleavage of indoleglycerol phosphate to indole and glyceraldehyde 3-phosphate. This chain is Tryptophan synthase alpha chain, found in Solibacter usitatus (strain Ellin6076).